The chain runs to 116 residues: uncharacterized protein (116 aa).

This is an uncharacterized protein from Invertebrate iridescent virus 6 (IIV-6).